The following is a 728-amino-acid chain: Pre-mRNA-splicing ATP-dependent RNA helicase prp-28 (728 aa).

Residues 19 to 155 (KKEEEAAAAK…NDEAELRARY (137 aa)) are disordered. Basic and acidic residues-rich tracts occupy residues 33 to 59 (PKKERERLEAEKKAKEEEERKRKEEAK), 109 to 125 (RDYRDNRDNRDNRDRNQ), and 137 to 153 (EEKRAKMERNDEAELRA). The Q motif motif lies at 293–321 (RSWEESTLPRRLLDIVKNVGYDEPTPIQR). The Helicase ATP-binding domain occupies 324-527 (IPIALQARDL…KKYLRRPAIV (204 aa)). ATP is bound at residue 337-344 (AVTGSGKT). The short motif at 450–453 (DEAD) is the DEAD box element. The Helicase C-terminal domain occupies 538–701 (TVEQRVEFVS…KVPDELRRHE (164 aa)). Residues 692-728 (KVPDELRRHEAAQNKPQKGQKKLEESNGYSGKGGSWN) are disordered. Residues 693-703 (VPDELRRHEAA) are compositionally biased toward basic and acidic residues.

The protein belongs to the DEAD box helicase family. DDX23/PRP28 subfamily. As to quaternary structure, component of the U5 snRNP complex.

It localises to the cytoplasm. The protein resides in the nucleus. It carries out the reaction ATP + H2O = ADP + phosphate + H(+). Its function is as follows. ATP-dependent RNA helicase involved in mRNA splicing. May destabilize the U1/5'-splice site duplex to permit an effective competition for the 5'-splice site by the U6 snRNA, resulting in the switch between U1 and U6 at the 5'-splice site. May also act to unwind the U4/U6 base-pairing interaction in the U4/U6/U5 snRNP, facilitating the first covalent step of splicing. This Neurospora crassa (strain ATCC 24698 / 74-OR23-1A / CBS 708.71 / DSM 1257 / FGSC 987) protein is Pre-mRNA-splicing ATP-dependent RNA helicase prp-28 (prp-28).